The primary structure comprises 507 residues: Subtilisin-like protease 1 (507 aa).

A signal peptide spans 1–19 (MGVFRFISISLAAVSAANA). A propeptide spanning residues 20–116 (AQILSMPHAQ…VEPDTIISVN (97 aa)) is cleaved from the precursor. Residues 34–113 (SYIVMMKDDT…VMFVEPDTII (80 aa)) enclose the Inhibitor I9 domain. The region spanning 126-400 (SWGLARISNS…NVLISNGGAK (275 aa)) is the Peptidase S8 domain. Residues Asp158 and His190 each act as charge relay system in the active site. Residues 175–198 (GSNQVNDGDDRDGSGHGTHTSGTM) are disordered. An N-linked (GlcNAc...) asparagine glycan is attached at Asn251. A compositionally biased stretch (polar residues) spans 282–294 (NENQDARSSSPAS). The tract at residues 282-312 (NENQDARSSSPASEPSVCTVGSSAEDDSRSS) is disordered. Catalysis depends on Ser345, which acts as the Charge relay system. Residues 378-394 (SSSITDVGPGTPTNVLI) are compositionally biased toward polar residues. A disordered region spans residues 378–486 (SSSITDVGPG…YPGGDNFDFD (109 aa)). Pro residues-rich tracts occupy residues 405–428 (KPAP…PSQP) and 438–449 (EPFPGEPFPGEP). The span at 450–461 (FPGESSPGESAP) shows a compositional bias: low complexity. Over residues 462 to 476 (APAPMPPSPQHPHTP) the composition is skewed to pro residues.

This sequence belongs to the peptidase S8 family.

Its subcellular location is the secreted. Functionally, secreted subtilisin-like serine protease with keratinolytic activity that contributes to pathogenicity. The polypeptide is Subtilisin-like protease 1 (SUB1) (Trichophyton equinum (Horse ringworm fungus)).